The chain runs to 303 residues: Taste receptor type 2 member 13 (303 aa).

Residues 1 to 7 (MESALPS) are Extracellular-facing. The helical transmembrane segment at 8–28 (IFTLVIIAEFIIGNLSNGFIV) threads the bilayer. Topologically, residues 29-55 (LINCIDWVSKRELSSVDKLLIILAISR) are cytoplasmic. A helical membrane pass occupies residues 56–76 (IGLIWEILVSWFLALHYLAIF). Topologically, residues 77 to 85 (VSGTGLRIM) are extracellular. A helical transmembrane segment spans residues 86–106 (IFSWIVSNHFNLWLATIFSIF). At 107 to 128 (YLLKIASFSSPAFLYLKWRVNK) the chain is on the cytoplasmic side. Residues 129–149 (VILMILLGTLVFLFLNLIQIN) traverse the membrane as a helical segment. Residues 150-184 (MHIKDWLDRYERNTTWNFSMSDFETFSVSVKFTMT) lie on the Extracellular side of the membrane. Residues Asn162 and Asn166 are each glycosylated (N-linked (GlcNAc...) asparagine). The helical transmembrane segment at 185–205 (MFSLTPFTVAFISFLLLIFSL) threads the bilayer. The Cytoplasmic portion of the chain corresponds to 206 to 232 (QKHLQKMQLNYKGHRDPRTKVHTNALK). The helical transmembrane segment at 233–253 (IVISFLLFYASFFLCVLISWI) threads the bilayer. Topologically, residues 254–261 (SELYQNTV) are extracellular. Residues 262 to 282 (IYMLCETIGVFSPSSHSFLLI) traverse the membrane as a helical segment. The Cytoplasmic segment spans residues 283–303 (LGNAKLRQAFLLVAAKVWAKR).

This sequence belongs to the G-protein coupled receptor T2R family. In terms of tissue distribution, expressed in subsets of taste receptor cells of the tongue and palate epithelium and exclusively in gustducin-positive cells.

The protein localises to the membrane. Receptor that may play a role in the perception of bitterness and is gustducin-linked. May play a role in sensing the chemical composition of the gastrointestinal content. The activity of this receptor may stimulate alpha gustducin, mediate PLC-beta-2 activation and lead to the gating of TRPM5. This Homo sapiens (Human) protein is Taste receptor type 2 member 13 (TAS2R13).